Here is a 372-residue protein sequence, read N- to C-terminus: Septin-1 (372 aa).

The Septin-type G domain occupies 27–301; the sequence is KGFDFTLMVA…EGYRARCLQS (275 aa). Residues 37 to 44 are G1 motif; it reads GESGLGKS. Residues 37 to 44, T71, G97, and 176 to 184 contribute to the GTP site; these read GESGLGKS and KADALMPQE. The interval 94-97 is G3 motif; it reads DTPG. Residues 175–178 are G4 motif; that stretch reads GKAD. S211 carries the post-translational modification Phosphoserine. G234 and R250 together coordinate GTP. S253 bears the Phosphoserine; by AURKB mark. At T256 the chain carries Phosphothreonine. Phosphoserine; by AURKB occurs at positions 312 and 320. The disordered stretch occupies residues 352-372; it reads LEKMQAQMQQSQAQGEQSDAL. Residues 355 to 372 are compositionally biased toward low complexity; it reads MQAQMQQSQAQGEQSDAL.

It belongs to the TRAFAC class TrmE-Era-EngA-EngB-Septin-like GTPase superfamily. Septin GTPase family. In terms of assembly, septins polymerize into heterooligomeric protein complexes that form filaments, and can associate with cellular membranes, actin filaments and microtubules. GTPase activity is required for filament formation. Interacts with AURKB. In terms of tissue distribution, expressed at high levels in lymphoid and hematopoietic tissues.

The protein localises to the cytoplasm. It localises to the cytoskeleton. The protein resides in the microtubule organizing center. Its subcellular location is the centrosome. It is found in the midbody. Functionally, filament-forming cytoskeletal GTPase. May play a role in cytokinesis (Potential). The polypeptide is Septin-1 (Homo sapiens (Human)).